A 191-amino-acid chain; its full sequence is Dephospho-CoA kinase (191 aa).

The DPCK domain occupies 3 to 191 (AIGITGSYAS…KLIKNLECQV (189 aa)). Position 11–16 (11–16 (ASGKTF)) interacts with ATP.

This sequence belongs to the CoaE family.

The protein resides in the cytoplasm. The catalysed reaction is 3'-dephospho-CoA + ATP = ADP + CoA + H(+). Its pathway is cofactor biosynthesis; coenzyme A biosynthesis; CoA from (R)-pantothenate: step 5/5. Its function is as follows. Catalyzes the phosphorylation of the 3'-hydroxyl group of dephosphocoenzyme A to form coenzyme A. The sequence is that of Dephospho-CoA kinase from Rickettsia typhi (strain ATCC VR-144 / Wilmington).